The sequence spans 276 residues: Formamidopyrimidine-DNA glycosylase (276 aa).

P2 (schiff-base intermediate with DNA) is an active-site residue. The active-site Proton donor is the E3. Catalysis depends on K59, which acts as the Proton donor; for beta-elimination activity. 3 residues coordinate DNA: H92, R111, and K155. The FPG-type zinc finger occupies 239 to 273 (AVYGQTGAPCPRCGTAIEKIKVGGRGTHFCPTCQQ). The active-site Proton donor; for delta-elimination activity is R263.

Belongs to the FPG family. As to quaternary structure, monomer. It depends on Zn(2+) as a cofactor.

The enzyme catalyses Hydrolysis of DNA containing ring-opened 7-methylguanine residues, releasing 2,6-diamino-4-hydroxy-5-(N-methyl)formamidopyrimidine.. The catalysed reaction is 2'-deoxyribonucleotide-(2'-deoxyribose 5'-phosphate)-2'-deoxyribonucleotide-DNA = a 3'-end 2'-deoxyribonucleotide-(2,3-dehydro-2,3-deoxyribose 5'-phosphate)-DNA + a 5'-end 5'-phospho-2'-deoxyribonucleoside-DNA + H(+). Its function is as follows. Involved in base excision repair of DNA damaged by oxidation or by mutagenic agents. Acts as a DNA glycosylase that recognizes and removes damaged bases. Has a preference for oxidized purines, such as 7,8-dihydro-8-oxoguanine (8-oxoG). Has AP (apurinic/apyrimidinic) lyase activity and introduces nicks in the DNA strand. Cleaves the DNA backbone by beta-delta elimination to generate a single-strand break at the site of the removed base with both 3'- and 5'-phosphates. The polypeptide is Formamidopyrimidine-DNA glycosylase (Exiguobacterium sibiricum (strain DSM 17290 / CCUG 55495 / CIP 109462 / JCM 13490 / 255-15)).